A 202-amino-acid polypeptide reads, in one-letter code: Coiled-coil domain-containing protein 85B (202 aa).

Residue Met1 is modified to N-acetylmethionine. Coiled-coil stretches lie at residues 43 to 90 (GRLM…ERQR) and 118 to 147 (QKLA…LGEE). The disordered stretch occupies residues 148 to 202 (WGPRGGPSGAGGSGAGPAPELALPPCGPRDLGDGSSSTGSVGSPDQLPLACSPDD). Residues 150–162 (PRGGPSGAGGSGA) show a composition bias toward gly residues. A compositionally biased stretch (low complexity) spans 180-190 (DGSSSTGSVGS).

Belongs to the CCDC85 family. As to quaternary structure, interacts with CEBPB. Interacts with EURL. May interact with CEBPD. Interacts with MCRS1. Interacts with TCF7L2; competes with CTNNB1. Interacts with ANKRD26. Interacts with the beta-catenin family proteins ARVCF, CTNND1, CTNND2 and PKP4. In terms of assembly, (Microbial infection) Interacts with the viral phosphoprotein hepatitis delta antigen (HDAG); this interaction affects hepatitis delta virus (HDV) genomic replication in intact cells. As to expression, widely expressed including liver.

It localises to the nucleus. Its subcellular location is the cytoplasm. The protein resides in the cytoskeleton. The protein localises to the microtubule organizing center. It is found in the centrosome. It localises to the cell junction. Its subcellular location is the adherens junction. Functions as a transcriptional repressor. May inhibit the activity of CTNNB1 in a TP53-dependent manner and thus regulate cell growth. May function in adipocyte differentiation, negatively regulating mitotic clonal expansion. Plays a role in cell-cell adhesion and epithelium development through its interaction with proteins of the beta-catenin family. In terms of biological role, (Microbial infection) Plays a role in hepatitis delta virus (HDV) genomic replication. This is Coiled-coil domain-containing protein 85B (CCDC85B) from Homo sapiens (Human).